Here is a 472-residue protein sequence, read N- to C-terminus: 2-oxoisovalerate dehydrogenase subunit alpha 1, mitochondrial (472 aa).

The transit peptide at 1-56 (MAIWFARSKTLVSSLRHNLNLSTILIKRDYSHRPIFYTTSQLSSTAYLSPFGSLRH) directs the protein to the mitochondrion. 185 to 187 (QYR) provides a ligand contact to thiamine diphosphate. 3 residues coordinate K(+): Ser234, Thr239, and Gln240.

Belongs to the BCKDHA family. In terms of assembly, heterotetramer of alpha and beta chains. Thiamine diphosphate is required as a cofactor.

It localises to the mitochondrion matrix. It carries out the reaction N(6)-[(R)-lipoyl]-L-lysyl-[protein] + 3-methyl-2-oxobutanoate + H(+) = N(6)-[(R)-S(8)-2-methylpropanoyldihydrolipoyl]-L-lysyl-[protein] + CO2. In terms of biological role, the branched-chain alpha-keto dehydrogenase complex catalyzes the overall conversion of alpha-keto acids to acyl-CoA and CO(2). It contains multiple copies of three enzymatic components: branched-chain alpha-keto acid decarboxylase (E1), lipoamide acyltransferase (E2) and lipoamide dehydrogenase (E3). Required during sugar starvation. The protein is 2-oxoisovalerate dehydrogenase subunit alpha 1, mitochondrial of Arabidopsis thaliana (Mouse-ear cress).